We begin with the raw amino-acid sequence, 589 residues long: ATP-dependent lipid A-core flippase (589 aa).

Transmembrane regions (helical) follow at residues 29–49 (LLLV…TGFL), 70–90 (WLPV…YITD), 157–177 (VIGA…TILV), 261–281 (MIGA…ALAG), and 283–303 (LTAG…PGLK). Residues 32–314 (VAALIAALIE…LTNVQNMVQR (283 aa)) form the ABC transmembrane type-1 domain. The ABC transporter domain occupies 346-582 (IEFRDVTARY…GGLYSHLHGM (237 aa)). 380-387 (GRSGSGKS) contributes to the ATP binding site.

The protein belongs to the ABC transporter superfamily. Lipid exporter (TC 3.A.1.106) family. As to quaternary structure, homodimer.

It localises to the cell inner membrane. The catalysed reaction is ATP + H2O + lipid A-core oligosaccharideSide 1 = ADP + phosphate + lipid A-core oligosaccharideSide 2.. In terms of biological role, involved in lipopolysaccharide (LPS) biosynthesis. Translocates lipid A-core from the inner to the outer leaflet of the inner membrane. Transmembrane domains (TMD) form a pore in the inner membrane and the ATP-binding domain (NBD) is responsible for energy generation. In Xanthomonas axonopodis pv. citri (strain 306), this protein is ATP-dependent lipid A-core flippase.